Reading from the N-terminus, the 243-residue chain is Transmembrane protein 176A (243 aa).

Position 42 is a phosphoserine (Ser-42). Helical transmembrane passes span 65–85 (WVVQ…LYIC), 92–112 (TQGA…VAFL), 122–142 (ALMR…AIVI), and 204–224 (LLGV…VYLW).

It belongs to the TMEM176 family. As to quaternary structure, interacts with MCOLN2.

The protein resides in the membrane. This is Transmembrane protein 176A (Tmem176a) from Rattus norvegicus (Rat).